The following is a 187-amino-acid chain: Adenylate kinase (187 aa).

ATP is bound at residue 11 to 16; that stretch reads GAGKGT. An NMP region spans residues 31–60; the sequence is STGDILREAVKNQTPMGIEAKRYMDAGDLV. Residues T32, R37, 58–60, 86–89, and Q93 each bind AMP; these read DLV and GFPR. An LID region spans residues 127 to 137; sequence GRAEIEGRADD. R128 is an ATP binding site. The AMP site is built by R134 and R145. Residue G173 coordinates ATP.

The protein belongs to the adenylate kinase family. Monomer.

The protein resides in the cytoplasm. The enzyme catalyses AMP + ATP = 2 ADP. The protein operates within purine metabolism; AMP biosynthesis via salvage pathway; AMP from ADP: step 1/1. Functionally, catalyzes the reversible transfer of the terminal phosphate group between ATP and AMP. Plays an important role in cellular energy homeostasis and in adenine nucleotide metabolism. The polypeptide is Adenylate kinase (Leptospira borgpetersenii serovar Hardjo-bovis (strain JB197)).